A 285-amino-acid chain; its full sequence is Probable endonuclease 4 (285 aa).

Zn(2+) is bound by residues H69, H109, E145, D179, H182, H216, D229, H231, and E261.

This sequence belongs to the AP endonuclease 2 family. Zn(2+) is required as a cofactor.

It catalyses the reaction Endonucleolytic cleavage to 5'-phosphooligonucleotide end-products.. In terms of biological role, endonuclease IV plays a role in DNA repair. It cleaves phosphodiester bonds at apurinic or apyrimidinic (AP) sites, generating a 3'-hydroxyl group and a 5'-terminal sugar phosphate. In Salmonella agona (strain SL483), this protein is Probable endonuclease 4.